The chain runs to 435 residues: Cytochrome c biogenesis protein CcsB (435 aa).

3 helical membrane passes run 14 to 34, 72 to 92, and 162 to 182; these read LRLA…GTIL, SVWF…CSWR, and VGPL…AWGA.

This sequence belongs to the Ccs1/CcsB family. In terms of assembly, may interact with CcsA.

It localises to the cellular thylakoid membrane. Required during biogenesis of c-type cytochromes (cytochrome c6 and cytochrome f) at the step of heme attachment. The chain is Cytochrome c biogenesis protein CcsB from Synechococcus sp. (strain CC9311).